Consider the following 646-residue polypeptide: FAD-binding monooxygenase prhK (646 aa).

Residue Asn46 is glycosylated (N-linked (GlcNAc...) asparagine). A helical transmembrane segment spans residues 80-97 (IIIIGAGFGGLLFAVRLI). FAD is bound by residues 119-122 (TWYW), 131-132 (DT), and Tyr137. 129–131 (MCD) contacts NADP(+). Residues 275-281 (TGATAIQ) and 298-299 (RT) each bind NADP(+). Residues Asn429, Asn483, and Asn529 are each glycosylated (N-linked (GlcNAc...) asparagine).

The protein belongs to the FAD-binding monooxygenase family. FAD is required as a cofactor.

The protein resides in the membrane. It carries out the reaction preaustinoid A + AH2 + O2 = preaustinoid A1 + A + H2O. Its pathway is secondary metabolite biosynthesis; terpenoid biosynthesis. FAD-binding monooxygenase; part of the gene cluster that mediates the biosynthesis of paraherquonin, a meroterpenoid with a unique, highly congested hexacyclic molecular architecture. The first step of the pathway is the synthesis of 3,5-dimethylorsellinic acid (DMOA) by the polyketide synthase prhL. Synthesis of DMOA is followed by farnesylation by the prenyltransferase prhE, methylesterification by the methyl-transferase prhM, epoxidation of the prenyl chain by the flavin-dependent monooxygenase prhF, and cyclization of the farnesyl moiety by the terpene cyclase prhH, to yield the tetracyclic intermediate, protoaustinoid A. The short chain dehydrogenase prhI then oxidizes the C-3 alcohol group of the terpene cyclase product to transform protoaustinoid A into protoaustinoid B. The FAD-binding monooxygenase prhJ catalyzes the oxidation of protoaustinoid B into preaustinoid A which is further oxidized into preaustinoid A1 by FAD-binding monooxygenase phrK. Finally, prhA leads to berkeleydione via the berkeleyone B intermediate. PrhA is a multifunctional dioxygenase that first desaturates at C5-C6 to form berkeleyone B, followed by rearrangement of the A/B-ring to form the cycloheptadiene moiety in berkeleydione. Berkeleydione serves as the key intermediate for the biosynthesis of paraherquonin as well as many other meroterpenoids. The cytochrome P450 monooxygenases prhB, prhD, and prhN, as well as the isomerase prhC, are probably involved in the late stage of paraherquonin biosynthesis, after the production of berkeleydione. Especially prhC might be a multifunctional enzyme that catalyzes the D-ring expansion via intramolecular methoxy rearrangement, as well as the hydrolysis of the expanded D-ring. This Penicillium brasilianum protein is FAD-binding monooxygenase prhK.